The following is a 200-amino-acid chain: Peptidyl-tRNA hydrolase (200 aa).

A tRNA-binding site is contributed by Y15. H20 serves as the catalytic Proton acceptor. TRNA contacts are provided by Y66, N68, and N114.

It belongs to the PTH family. As to quaternary structure, monomer.

Its subcellular location is the cytoplasm. It catalyses the reaction an N-acyl-L-alpha-aminoacyl-tRNA + H2O = an N-acyl-L-amino acid + a tRNA + H(+). Hydrolyzes ribosome-free peptidyl-tRNAs (with 1 or more amino acids incorporated), which drop off the ribosome during protein synthesis, or as a result of ribosome stalling. In terms of biological role, catalyzes the release of premature peptidyl moieties from peptidyl-tRNA molecules trapped in stalled 50S ribosomal subunits, and thus maintains levels of free tRNAs and 50S ribosomes. This chain is Peptidyl-tRNA hydrolase, found in Paraburkholderia phymatum (strain DSM 17167 / CIP 108236 / LMG 21445 / STM815) (Burkholderia phymatum).